Reading from the N-terminus, the 676-residue chain is UvrABC system protein C (676 aa).

Positions 16-95 (VEPGVYRFRD…IKEFDPRFNI (80 aa)) constitute a GIY-YIG domain. A UVR domain is found at 208 to 243 (DRLVRDLERKMTAAAEDLDFERAARLRDDIGALRRA).

It belongs to the UvrC family. In terms of assembly, interacts with UvrB in an incision complex.

It localises to the cytoplasm. The UvrABC repair system catalyzes the recognition and processing of DNA lesions. UvrC both incises the 5' and 3' sides of the lesion. The N-terminal half is responsible for the 3' incision and the C-terminal half is responsible for the 5' incision. This is UvrABC system protein C from Mycobacterium sp. (strain JLS).